The chain runs to 656 residues: Macrolide export ATP-binding/permease protein MacB (656 aa).

The ABC transporter domain maps to 20–258; it reads IELAGITRSF…EPDFAPHVDR (239 aa). 56 to 63 is an ATP binding site; sequence GASGSGKS. A run of 4 helical transmembrane segments spans residues 284-304, 531-551, 591-611, and 619-639; these read ALTLLGIVIGVASVIAMLAIG, LTILLGTVAAISLLVGGIGVM, ALGGLIGVAVGLGTAAVIALF, and LLPVVLAFGCAFATGLVFGYL.

This sequence belongs to the ABC transporter superfamily. Macrolide exporter (TC 3.A.1.122) family. Homodimer.

The protein resides in the cell inner membrane. Non-canonical ABC transporter that contains transmembrane domains (TMD), which form a pore in the inner membrane, and an ATP-binding domain (NBD), which is responsible for energy generation. Confers resistance against macrolides. The polypeptide is Macrolide export ATP-binding/permease protein MacB (Azoarcus sp. (strain BH72)).